A 139-amino-acid polypeptide reads, in one-letter code: ATP synthase epsilon chain (139 aa).

The protein belongs to the ATPase epsilon chain family. In terms of assembly, F-type ATPases have 2 components, CF(1) - the catalytic core - and CF(0) - the membrane proton channel. CF(1) has five subunits: alpha(3), beta(3), gamma(1), delta(1), epsilon(1). CF(0) has three main subunits: a, b and c.

Its subcellular location is the cell inner membrane. Functionally, produces ATP from ADP in the presence of a proton gradient across the membrane. This Pseudomonas syringae pv. tomato (strain ATCC BAA-871 / DC3000) protein is ATP synthase epsilon chain.